A 248-amino-acid polypeptide reads, in one-letter code: Mannose-binding protein C (248 aa).

Residues 1–20 (MSLFPSLPLLLLSMVAASYS) form the signal peptide. Residues 42–99 (GINGFPGKDGRDGTKGEKGEPGQGLRGLQGPPGKLGPPGNPGPSGSPGPKGQKGDPGK) enclose the Collagen-like domain. The tract at residues 43 to 113 (INGFPGKDGR…DSSLAASERK (71 aa)) is disordered. Hydroxyproline is present on proline 47. Over residues 49 to 61 (KDGRDGTKGEKGE) the composition is skewed to basic and acidic residues. Hydroxyproline is present on residues proline 73, proline 79, proline 82, and proline 88. Residues 75 to 87 (KLGPPGNPGPSGS) show a composition bias toward pro residues. A compositionally biased stretch (basic and acidic residues) spans 93–102 (QKGDPGKSPD). Residues 112 to 130 (RKALQTEMARIKKWLTFSL) are a coiled coil. The C-type lectin domain occupies 134–245 (VGNKFFLTNG…CSTSHLAVCE (112 aa)). Intrachain disulfides connect cysteine 155/cysteine 244 and cysteine 222/cysteine 236.

As to quaternary structure, oligomeric complex of 3 or more homotrimers. Interacts with MASP1 and MASP2. Interacts with MEP1A and MEP1B and may inhibit their catalytic activity. Interacts with CR1 (via Sushi 24 and Sushi 25 domains). In terms of assembly, (Microbial infection) Interacts with SARS coronavirus-2/SARS-CoV-2 Spike glycoprotein homotrimer; the interaction is calcium-dependent and modulated by Spike glycoprotein glycosylation state. As to expression, plasma protein produced mainly in the liver.

It is found in the secreted. Functionally, calcium-dependent lectin involved in innate immune defense. Binds mannose, fucose and N-acetylglucosamine on different microorganisms and activates the lectin complement pathway. Binds to late apoptotic cells, as well as to apoptotic blebs and to necrotic cells, but not to early apoptotic cells, facilitating their uptake by macrophages. May bind DNA. Upon SARS coronavirus-2/SARS-CoV-2 infection, activates the complement lectin pathway which leads to the inhibition SARS-CoV-2 infection and a reduction of the induced inflammatory response. The chain is Mannose-binding protein C from Homo sapiens (Human).